The sequence spans 205 residues: Probable NAD(P)H dehydrogenase (quinone) FQR1-like 1 (205 aa).

The Flavodoxin-like domain occupies 5 to 192; that stretch reads VYIVYYSMYG…GQAFHQGKYI (188 aa). FMN contacts are provided by residues 11–15, 112–165, and His-136; these read SMYGH and IFYS…SPYG. Tyr-13 lines the NAD(+) pocket.

The protein belongs to the WrbA family. Requires FMN as cofactor.

Its subcellular location is the cell membrane. The enzyme catalyses a quinone + NADH + H(+) = a quinol + NAD(+). The catalysed reaction is a quinone + NADPH + H(+) = a quinol + NADP(+). Catalyzes the transfer of electrons from NADH and NADPH to reduce quinone to the hydroquinone state. This is Probable NAD(P)H dehydrogenase (quinone) FQR1-like 1 from Arabidopsis thaliana (Mouse-ear cress).